A 316-amino-acid chain; its full sequence is Pantothenate kinase (316 aa).

An ATP-binding site is contributed by 95 to 102; that stretch reads GSVAVGKS.

The protein belongs to the prokaryotic pantothenate kinase family.

It is found in the cytoplasm. It catalyses the reaction (R)-pantothenate + ATP = (R)-4'-phosphopantothenate + ADP + H(+). The protein operates within cofactor biosynthesis; coenzyme A biosynthesis; CoA from (R)-pantothenate: step 1/5. This chain is Pantothenate kinase, found in Shigella boydii serotype 18 (strain CDC 3083-94 / BS512).